The primary structure comprises 225 residues: Ribonuclease 3 (225 aa).

The RNase III domain occupies 5-127; that stretch reads IDKLERKIGY…IIGAVYLDSD (123 aa). Glu-40 lines the Mg(2+) pocket. The active site involves Asp-44. Residues Asp-113 and Glu-116 each coordinate Mg(2+). Glu-116 is a catalytic residue. Residues 154 to 224 form the DRBM domain; the sequence is DPKTRLQEFL…AETALEQLSN (71 aa).

It belongs to the ribonuclease III family. As to quaternary structure, homodimer. Requires Mg(2+) as cofactor.

It is found in the cytoplasm. It catalyses the reaction Endonucleolytic cleavage to 5'-phosphomonoester.. Functionally, digests double-stranded RNA. Involved in the processing of primary rRNA transcript to yield the immediate precursors to the large and small rRNAs (23S and 16S). Processes some mRNAs, and tRNAs when they are encoded in the rRNA operon. Processes pre-crRNA and tracrRNA of type II CRISPR loci if present in the organism. The chain is Ribonuclease 3 from Vibrio atlanticus (strain LGP32) (Vibrio splendidus (strain Mel32)).